The chain runs to 194 residues: Putative manganese efflux pump MntP (194 aa).

6 consecutive transmembrane segments (helical) span residues 6–26, 35–55, 66–86, 109–129, 142–162, and 174–194; these read LILVAVALGTDAFSLATGLAL, WLFAGTVGLFHIFMPLAGLYL, VAAIIGALVLATMGTLMLWEA, GVLGGVMAILFMAGSVSLDAL, VPLTVLTMGFIAATMTALGLL, and RAELAGGLILVAIGLKMLVGV.

It belongs to the MntP (TC 9.B.29) family.

It is found in the cell membrane. In terms of biological role, probably functions as a manganese efflux pump. This is Putative manganese efflux pump MntP from Moorella thermoacetica (strain ATCC 39073 / JCM 9320).